The chain runs to 760 residues: Xaa-Pro dipeptidyl-peptidase (760 aa).

Residues serine 349, aspartate 469, and histidine 499 each act as charge relay system in the active site.

This sequence belongs to the peptidase S15 family. In terms of assembly, homodimer.

It is found in the cytoplasm. The catalysed reaction is Hydrolyzes Xaa-Pro-|- bonds to release unblocked, N-terminal dipeptides from substrates including Ala-Pro-|-p-nitroanilide and (sequentially) Tyr-Pro-|-Phe-Pro-|-Gly-Pro-|-Ile.. Functionally, removes N-terminal dipeptides sequentially from polypeptides having unsubstituted N-termini provided that the penultimate residue is proline. The sequence is that of Xaa-Pro dipeptidyl-peptidase from Streptococcus pyogenes serotype M12 (strain MGAS9429).